Here is a 125-residue protein sequence, read N- to C-terminus: Small ribosomal subunit protein uS12 (125 aa).

Position 89 is a 3-methylthioaspartic acid (D89).

The protein belongs to the universal ribosomal protein uS12 family. In terms of assembly, part of the 30S ribosomal subunit. Contacts proteins S8 and S17. May interact with IF1 in the 30S initiation complex.

Functionally, with S4 and S5 plays an important role in translational accuracy. Its function is as follows. Interacts with and stabilizes bases of the 16S rRNA that are involved in tRNA selection in the A site and with the mRNA backbone. Located at the interface of the 30S and 50S subunits, it traverses the body of the 30S subunit contacting proteins on the other side and probably holding the rRNA structure together. The combined cluster of proteins S8, S12 and S17 appears to hold together the shoulder and platform of the 30S subunit. The sequence is that of Small ribosomal subunit protein uS12 from Wigglesworthia glossinidia brevipalpis.